Reading from the N-terminus, the 62-residue chain is Short neurotoxin B (62 aa).

Positions 1-16 (RRCFNHPSSQPQTNKS) are enriched in polar residues. Residues 1–21 (RRCFNHPSSQPQTNKSCPPGE) form a disordered region. Intrachain disulfides connect C3/C24, C17/C41, C43/C54, and C55/C60.

This sequence belongs to the three-finger toxin family. Short-chain subfamily. Type I alpha-neurotoxin sub-subfamily. In terms of tissue distribution, expressed by the venom gland.

It is found in the secreted. Its function is as follows. Binds to muscle nicotinic acetylcholine receptor (nAChR) and inhibit acetylcholine from binding to the receptor, thereby impairing neuromuscular transmission. In Laticauda crockeri (Crocker's sea snake), this protein is Short neurotoxin B.